We begin with the raw amino-acid sequence, 198 residues long: Probable nicotinate-nucleotide adenylyltransferase (198 aa).

This sequence belongs to the NadD family.

It carries out the reaction nicotinate beta-D-ribonucleotide + ATP + H(+) = deamido-NAD(+) + diphosphate. The protein operates within cofactor biosynthesis; NAD(+) biosynthesis; deamido-NAD(+) from nicotinate D-ribonucleotide: step 1/1. Functionally, catalyzes the reversible adenylation of nicotinate mononucleotide (NaMN) to nicotinic acid adenine dinucleotide (NaAD). The chain is Probable nicotinate-nucleotide adenylyltransferase from Chlorobium limicola (strain DSM 245 / NBRC 103803 / 6330).